The sequence spans 182 residues: Ribosome maturation factor RimM (182 aa).

The region spanning 103 to 182 (EGDYYWKDLM…SIEVDWDPGF (80 aa)) is the PRC barrel domain.

It belongs to the RimM family. In terms of assembly, binds ribosomal protein uS19.

The protein resides in the cytoplasm. In terms of biological role, an accessory protein needed during the final step in the assembly of 30S ribosomal subunit, possibly for assembly of the head region. Essential for efficient processing of 16S rRNA. May be needed both before and after RbfA during the maturation of 16S rRNA. It has affinity for free ribosomal 30S subunits but not for 70S ribosomes. This chain is Ribosome maturation factor RimM, found in Escherichia coli O139:H28 (strain E24377A / ETEC).